Consider the following 413-residue polypeptide: Peptidase T (413 aa).

His-82 is a Zn(2+) binding site. Residue Asp-84 is part of the active site. Asp-144 contributes to the Zn(2+) binding site. The active-site Proton acceptor is the Glu-178. The Zn(2+) site is built by Glu-179, Asp-201, and His-383.

The protein belongs to the peptidase M20B family. In terms of assembly, homotrimer. The cofactor is Zn(2+).

The protein resides in the cytoplasm. The enzyme catalyses Release of the N-terminal residue from a tripeptide.. Totally inhibited by EDTA, EGTA, and 1,10-phenanthroline. Strongly inhibited by divalent cations such as Cu(2+), Cd(2+), Co(2+) and Mn(2+). Partially inhibited by the reducing agents 2-mercaptoethanol and dithiothreitol. Functionally, cleaves the N-terminal amino acid of tripeptides. Shows broad substrate specificity, exhibiting maximum activity against hydrophobic tripeptides, with the highest activity for Met-Gly-Gly. Therefore this enzyme may play an important role in flavor formation during cheese ripening. Is also able to slowly hydrolyze some hydrophobic dipeptides, but displays no activity against tetrapeptides and the tripeptide Phe-Gly-Gly. The polypeptide is Peptidase T (pepT) (Lactobacillus helveticus (Lactobacillus suntoryeus)).